The following is a 386-amino-acid chain: Palmitoyltransferase ZDHHC9 (386 aa).

Residues Met-1–Lys-35 lie on the Cytoplasmic side of the membrane. A helical transmembrane segment spans residues Gly-36–Glu-56. Topologically, residues Cys-57 to His-63 are lumenal. A helical transmembrane segment spans residues Leu-64–Leu-84. Topologically, residues Arg-85–Tyr-183 are cytoplasmic. Positions Lys-139 to Leu-189 constitute a DHHC domain. The S-palmitoyl cysteine intermediate role is filled by Cys-169. A helical membrane pass occupies residues Phe-184–Val-204. Residues His-205–Gly-224 are Lumenal-facing. Residues Thr-225–Phe-245 form a helical membrane-spanning segment. Topologically, residues His-246–His-386 are cytoplasmic. Positions Ser-306–Ser-334 are enriched in polar residues. The disordered stretch occupies residues Ser-306 to His-386.

This sequence belongs to the DHHC palmitoyltransferase family. ERF2/ZDHHC9 subfamily.

It is found in the endoplasmic reticulum membrane. It localises to the golgi apparatus membrane. The catalysed reaction is L-cysteinyl-[protein] + hexadecanoyl-CoA = S-hexadecanoyl-L-cysteinyl-[protein] + CoA. Its function is as follows. Palmitoyltransferase that catalyzes the addition of palmitate onto various protein substrates, such as ADRB2, GSDMD, HRAS, NRAS and CGAS. This chain is Palmitoyltransferase ZDHHC9, found in Danio rerio (Zebrafish).